A 343-amino-acid chain; its full sequence is N-acetyl-gamma-glutamyl-phosphate reductase (343 aa).

Residue cysteine 147 is part of the active site.

The protein belongs to the NAGSA dehydrogenase family. Type 1 subfamily.

Its subcellular location is the cytoplasm. The enzyme catalyses N-acetyl-L-glutamate 5-semialdehyde + phosphate + NADP(+) = N-acetyl-L-glutamyl 5-phosphate + NADPH + H(+). It participates in amino-acid biosynthesis; L-arginine biosynthesis; N(2)-acetyl-L-ornithine from L-glutamate: step 3/4. Its function is as follows. Catalyzes the NADPH-dependent reduction of N-acetyl-5-glutamyl phosphate to yield N-acetyl-L-glutamate 5-semialdehyde. The sequence is that of N-acetyl-gamma-glutamyl-phosphate reductase from Staphylococcus aureus (strain Mu3 / ATCC 700698).